The primary structure comprises 165 residues: Choriogonadotropin subunit beta 3 (165 aa).

The N-terminal stretch at 1–20 (MEMFQGLLLLLLLSMGGTWA) is a signal peptide. Intrachain disulfides connect Cys29/Cys77, Cys43/Cys92, Cys46/Cys130, Cys54/Cys108, Cys58/Cys110, and Cys113/Cys120. Asn33 and Asn50 each carry an N-linked (GlcNAc...) asparagine glycan. Residues 131 to 165 (DDPRFQDSSSSKAPPPSLPSPSRLPGPSDTPILPQ) are disordered. O-linked (GalNAc...) serine glycosylation is found at Ser141, Ser147, Ser152, and Ser158. Residues 143-154 (APPPSLPSPSRL) are compositionally biased toward pro residues.

Belongs to the glycoprotein hormones subunit beta family. Heterodimer of a common alpha chain identical in LH, FSH, TSH and HCG and a unique beta chain distinct in each of the hormones. High expression in the placenta throughout pregnancy.

The protein resides in the secreted. In terms of biological role, beta subunit of the human chorionic gonadotropin (hCG). hCG is a complex glycoprotein composed of two glycosylated subunits alpha and beta which are non-covalently associated. The alpha subunit is identical to those in the pituitary gonadotropin hormones (LH, FSH and TSH). The beta subunits are distinct in each of the hormones and confer receptor and biological specificity. Has an essential role in pregnancy and maternal adaptation. Stimulates the ovaries to synthesize the steroids that are essential for the maintenance of pregnancy. In Homo sapiens (Human), this protein is Choriogonadotropin subunit beta 3 (CGB3).